A 346-amino-acid chain; its full sequence is [LysW]-lysine/[LysW]-ornithine hydrolase (346 aa).

Zn(2+) is bound at residue H68. D70 is an active-site residue. Position 92 (D92) interacts with Zn(2+). The active-site Proton acceptor is the E122. 3 residues coordinate Zn(2+): E123, E146, and H317.

This sequence belongs to the peptidase M20A family. LysK subfamily. Zn(2+) serves as cofactor. It depends on Co(2+) as a cofactor.

It is found in the cytoplasm. It carries out the reaction [amino-group carrier protein]-C-terminal-gamma-(L-lysyl)-L-glutamate + H2O = [amino-group carrier protein]-C-terminal-L-glutamate + L-lysine. The catalysed reaction is [amino-group carrier protein]-C-terminal-gamma-(L-ornithyl)-L-glutamate + H2O = [amino-group carrier protein]-C-terminal-L-glutamate + L-ornithine. It participates in amino-acid biosynthesis; L-lysine biosynthesis via AAA pathway; L-lysine from L-alpha-aminoadipate (Thermus route): step 5/5. It functions in the pathway amino-acid biosynthesis; L-arginine biosynthesis. Its function is as follows. Catalyzes the release of L-lysine from [LysW]-gamma-L-lysine and the release of L-ornithine from [LysW]-L-ornithine. The protein is [LysW]-lysine/[LysW]-ornithine hydrolase of Saccharolobus islandicus (strain M.16.4 / Kamchatka #3) (Sulfolobus islandicus).